A 2549-amino-acid polypeptide reads, in one-letter code: Serine/threonine-protein kinase mTOR (2549 aa).

An N-acetylmethionine modification is found at Met1. The tract at residues 1–651 (MLGTGPAVAT…HVVSQTAVQV (651 aa)) is interaction with NBN. HEAT repeat units lie at residues 16–53 (SSNV…MELR), 55–99 (MSQE…VEGG), 100–137 (NSTR…AMAG), 138–179 (DTFT…AISV), 180–220 (PTFF…LILT), 222–276 (QREP…RISS), 277–313 (MEGE…PRHI), 314–364 (TPFT…CCRD), 365–409 (LMEE…AFTD), 410–445 (TQYL…VAVR), 446–494 (SEFK…RAMG), 495–529 (PGIQ…RQIP), 530–563 (QLKK…GLAH), 564–596 (QLAS…EFEG), 597–636 (HSLT…SIHL), 637–683 (ISGH…DERF), 686–724 (HLAQ…MNPA), 727–766 (MPFL…NAPR), 769–811 (RPYM…VSGL), 814–853 (RKWV…STGY), 857–893 (PYRK…LLGA), 894–942 (LDPY…GNLP), 943–988 (LDEF…KCVQ), 989–1027 (FLPQ…KSHI), 1029–1068 (PYMD…GEFK), 1069–1105 (LYLP…LFGA), 1106–1144 (NLDD…RLTE), 1145–1188 (SLDF…GKKY), 1189–1225 (QIFI…LADE), 1226–1273 (EEDP…GAAR), 1274–1311 (RVSK…QAYN), and 1312–1345 (PMAR…ELAL). The residue at position 567 (Ser567) is a Phosphoserine. Thr1162 carries the post-translational modification Phosphothreonine. Lys1218 bears the N6-acetyllysine mark. Residue Ser1261 is modified to Phosphoserine. 16 TPR repeats span residues 1346-1382 (TSQD…GIVL), 1383-1408 (LGER…QKGP), 1409-1442 (TPAI…HFGE), 1443-1473 (LEIQ…NKED), 1474-1507 (PELM…VNDE), 1508-1541 (TQAK…RDTH), 1542-1574 (DGAF…LDAE), 1575-1614 (LTAM…RREI), 1615-1649 (IRQI…PHED), 1650-1693 (MRTW…PTAH), 1694-1731 (PQVT…AQHA), 1732-1786 (IATE…DRSW), 1787-1846 (YKAW…STEG), 1898-1930 (NNLQ…VKAI), 1931-1970 (QIDT…YHPQ), and 1971-2005 (ALIY…SNTL). The 601-residue stretch at 1382–1982 (LLGERAAKCR…IYPLTVASKS (601 aa)) folds into the FAT domain. 1D-myo-inositol hexakisphosphate is bound by residues Lys1662, Lys1702, and Arg1749. Low complexity predominate over residues 1825–1860 (ITNATTAATTAASAAAATSTEGSNSESEAESNENSP). A disordered region spans residues 1825–1867 (ITNATTAATTAASAAAATSTEGSNSESEAESNENSPTPSPLQK). The tract at residues 2012 to 2144 (VSEELIRVAI…DLELAVPGTY (133 aa)) is sufficient for interaction with the FKBP1A/rapamycin complex. Lys2066 participates in a covalent cross-link: Glycyl lysine isopeptide (Lys-Gly) (interchain with G-Cter in ubiquitin). Residues 2156–2469 (IAPSLQVITS…GVELGEPAHK (314 aa)) form the PI3K/PI4K catalytic domain. Ser2159 bears the Phosphoserine; by TBK1 mark. The G-loop stretch occupies residues 2162 to 2168 (VITSKQR). Position 2164 is a phosphothreonine (Thr2164). The ATP site is built by Ser2165 and Gln2167. Thr2173 carries the post-translational modification Phosphothreonine; by PKB/AKT1. ATP contacts are provided by Leu2185, Lys2187, Glu2190, Tyr2225, Gly2238, Trp2239, Val2240, and Thr2245. The interval 2258-2296 (KILLNIEHRIMLRMAPDYDHLTLMQKVEVFEHAVNNTAG) is interaction with MLST8. The tract at residues 2335–2343 (GLGDRHPSN) is catalytic loop. Asn2343 lines the Mg(2+) pocket. ATP contacts are provided by Met2345 and Ile2356. Residues 2355-2380 (HIDFGDCFEVAMTREKFPEKIPFRLT) are activation loop. Position 2357 (Asp2357) interacts with Mg(2+). Thr2446 carries the post-translational modification Phosphothreonine; by RPS6KB1. Ser2448 is subject to Phosphoserine; by RPS6KB1. Phosphoserine occurs at positions 2478 and 2481. The region spanning 2517 to 2549 (DTLDVPTQVELLIKQATSHENLCQCYIGWCPFW) is the FATC domain.

It belongs to the PI3/PI4-kinase family. Part of the mechanistic target of rapamycin complex 1 (mTORC1) which contains MTOR, MLST8 and RPTOR. The mTORC1 complex is a 1 Md obligate dimer of two stoichiometric heterotetramers with overall dimensions of 290 A x 210 A x 135 A. It has a rhomboid shape and a central cavity, the dimeric interfaces are formed by interlocking interactions between the two MTOR and the two RPTOR subunits. The MLST8 subunit forms distal foot-like protuberances, and contacts only one MTOR within the complex, while the small AKT1S1/PRAS40 localizes to the midsection of the central core, in close proximity to RPTOR. mTORC1 associates with AKT1S1/PRAS40, which inhibits its activity by blocking MTOR substrate-recruitment site. Component of the mechanistic target of rapamycin complex 2 (mTORC2), consisting in two heterotretramers composed of MTOR, MLST8, RICTOR and MAPKAP1/SIN1. Interacts with PLPP7 and PML. Interacts with PRR5 and RICTOR; the interaction is direct within the mTORC2 complex and interaction with RICTOR is enhanced by deubiquitination of RICTOR by USP9X. mTORC1 and mTORC2 associate with DEPTOR, which regulates their activity. Interacts with WAC; WAC positively regulates MTOR activity by promoting the assembly of the TTT complex composed of TELO2, TTI1 and TTI2 and the RUVBL complex composed of RUVBL1 and RUVBL2 into the TTT-RUVBL complex which leads to the dimerization of the mTORC1 complex and its subsequent activation. Interacts with UBQLN1. Interacts with TTI1 and TELO2. Interacts with CLIP1; phosphorylates and regulates CLIP1. Interacts with NBN. Interacts with HTR6. Interacts with BRAT1. Interacts with MEAK7 (via C-terminal domain); the interaction increases upon nutrient stimulation. Interacts with TM4SF5; the interaction is positively regulated by arginine and is negatively regulated by leucine. Interacts with GPR137B. Interacts with NCKAP1L. Interacts with TPCN1 and TPCN2; the interaction is required for TPCN1 and TPCN2 sensitivity to ATP. Interacts with ATP6V1A and with CRYAB, forming a ternary complex. Interacts with SLC38A7; this interaction mediates the recruitment of mTORC1 to the lysosome and its subsequent activation. Interacts with TSPAN8. In terms of processing, autophosphorylates when part of mTORC1 or mTORC2. Phosphorylation at Ser-1261, Ser-2159 and Thr-2164 promotes autophosphorylation. Phosphorylated at Ser-2448 by RPS6KB1. Phosphorylation in the kinase domain modulates the interactions of MTOR with RPTOR and AKT1S1/PRAS40 and leads to increased intrinsic mTORC1 kinase activity. Phosphorylation at Ser-2159 by TBK1 in response to growth factors and pathogen recognition receptors promotes mTORC1 activity. Phosphorylation at Ser-2159 by TBK1 in response to EGF growth factor promotes mTORC2 activity, leading to AKT1 phosphorylation and activation. Phosphorylation at Thr-2173 in the ATP-binding region by AKT1 strongly reduces kinase activity. Ubiquitinated at Lys-2066 by the SCF(FBXO22) complex via 'Lys-27'-linked ubiquitination prevents mTORC1 substrate recruitment.

The protein resides in the lysosome membrane. It is found in the endoplasmic reticulum membrane. It localises to the golgi apparatus membrane. Its subcellular location is the cell membrane. The protein localises to the mitochondrion outer membrane. The protein resides in the cytoplasm. It is found in the nucleus. It localises to the PML body. Its subcellular location is the microsome membrane. The protein localises to the cytoplasmic vesicle. The protein resides in the phagosome. The enzyme catalyses L-seryl-[protein] + ATP = O-phospho-L-seryl-[protein] + ADP + H(+). It catalyses the reaction L-threonyl-[protein] + ATP = O-phospho-L-threonyl-[protein] + ADP + H(+). It carries out the reaction L-tyrosyl-[protein] + ATP = O-phospho-L-tyrosyl-[protein] + ADP + H(+). The mTORC1 complex is activated in response to nutrients, growth factors or amino acids: activation requires relocalization of the mTORC1 complex to lysosomes that is mediated by the Ragulator complex, SLC38A9, and the Rag GTPases RagA/RRAGA, RagB/RRAGB, RagC/RRAGC and RagD/RRAGD. Activation of mTORC1 by growth factors such as insulin involves AKT1-mediated phosphorylation of TSC1-TSC2, which leads to the activation of the RHEB GTPase a potent activator of the protein kinase activity of mTORC1. Insulin-stimulated and amino acid-dependent phosphorylation at Ser-1261 promotes autophosphorylation and the activation of mTORC1. On the other hand, low cellular energy levels can inhibit mTORC1 through activation of PRKAA1 while hypoxia inhibits mTORC1 through a REDD1-dependent mechanism which may also require PRKAA1. The kinase activity of MTOR within the mTORC1 complex is positively regulated by MLST8. The kinase activity of MTOR is inhibited by DEPTOR and AKT1S1. The non-canonical mTORC1 complex is independent of the RHEB GTPase and specifically mediates phosphorylation of MiT/TFE factors TFEB and TFE3 but not other mTORC1 substrates: it is activated by FLCN, which activates Rag GTPases RagC/RRAGC and RagD/RRAGD. MTOR is the target of the immunosuppressive and anti-cancer drug rapamycin which acts in complex with FKBP1A/FKBP12, and specifically inhibits its kinase activity. mTORC2 is also activated by growth factors, but seems to be nutrient-insensitive. mTORC2 associates and is directly activated by ribosomes. mTORC2 may also be regulated by RHEB but in an indirect manner through the PI3K signaling pathway. In terms of biological role, serine/threonine protein kinase which is a central regulator of cellular metabolism, growth and survival in response to hormones, growth factors, nutrients, energy and stress signals. MTOR directly or indirectly regulates the phosphorylation of at least 800 proteins. Functions as part of 2 structurally and functionally distinct signaling complexes mTORC1 and mTORC2 (mTOR complex 1 and 2). In response to nutrients, growth factors or amino acids, mTORC1 is recruited to the lysosome membrane and promotes protein, lipid and nucleotide synthesis by phosphorylating key regulators of mRNA translation and ribosome synthesis. This includes phosphorylation of EIF4EBP1 and release of its inhibition toward the elongation initiation factor 4E (eiF4E). Moreover, phosphorylates and activates RPS6KB1 and RPS6KB2 that promote protein synthesis by modulating the activity of their downstream targets including ribosomal protein S6, eukaryotic translation initiation factor EIF4B, and the inhibitor of translation initiation PDCD4. Stimulates the pyrimidine biosynthesis pathway, both by acute regulation through RPS6KB1-mediated phosphorylation of the biosynthetic enzyme CAD, and delayed regulation, through transcriptional enhancement of the pentose phosphate pathway which produces 5-phosphoribosyl-1-pyrophosphate (PRPP), an allosteric activator of CAD at a later step in synthesis, this function is dependent on the mTORC1 complex. Regulates ribosome synthesis by activating RNA polymerase III-dependent transcription through phosphorylation and inhibition of MAF1 an RNA polymerase III-repressor. Activates dormant ribosomes by mediating phosphorylation of SERBP1, leading to SERBP1 inactivation and reactivation of translation. In parallel to protein synthesis, also regulates lipid synthesis through SREBF1/SREBP1 and LPIN1. To maintain energy homeostasis mTORC1 may also regulate mitochondrial biogenesis through regulation of PPARGC1A. In the same time, mTORC1 inhibits catabolic pathways: negatively regulates autophagy through phosphorylation of ULK1. Under nutrient sufficiency, phosphorylates ULK1 at 'Ser-758', disrupting the interaction with AMPK and preventing activation of ULK1. Also prevents autophagy through phosphorylation of the autophagy inhibitor DAP. Also prevents autophagy by phosphorylating RUBCNL/Pacer under nutrient-rich conditions. Prevents autophagy by mediating phosphorylation of AMBRA1, thereby inhibiting AMBRA1 ability to mediate ubiquitination of ULK1 and interaction between AMBRA1 and PPP2CA. mTORC1 exerts a feedback control on upstream growth factor signaling that includes phosphorylation and activation of GRB10 a INSR-dependent signaling suppressor. Among other potential targets mTORC1 may phosphorylate CLIP1 and regulate microtubules. The mTORC1 complex is inhibited in response to starvation and amino acid depletion. The non-canonical mTORC1 complex, which acts independently of RHEB, specifically mediates phosphorylation of MiT/TFE factors TFEB and TFE3 in the presence of nutrients, promoting their cytosolic retention and inactivation. Upon starvation or lysosomal stress, inhibition of mTORC1 induces dephosphorylation and nuclear translocation of TFEB and TFE3, promoting their transcription factor activity. The mTORC1 complex regulates pyroptosis in macrophages by promoting GSDMD oligomerization. MTOR phosphorylates RPTOR which in turn inhibits mTORC1. As part of the mTORC2 complex, MTOR transduces signals from growth factors to pathways involved in proliferation, cytoskeletal organization, lipogenesis and anabolic output. In response to growth factors, mTORC2 phosphorylates and activates AGC protein kinase family members, including AKT (AKT1, AKT2 and AKT3), PKC (PRKCA, PRKCB and PRKCE) and SGK1. In contrast to mTORC1, mTORC2 is nutrient-insensitive. mTORC2 plays a critical role in AKT1 activation by mediating phosphorylation of different sites depending on the context, such as 'Thr-450', 'Ser-473', 'Ser-477' or 'Thr-479', facilitating the phosphorylation of the activation loop of AKT1 on 'Thr-308' by PDPK1/PDK1 which is a prerequisite for full activation. mTORC2 also regulates the phosphorylation of SGK1 at 'Ser-422'. mTORC2 may regulate the actin cytoskeleton, through phosphorylation of PRKCA, PXN and activation of the Rho-type guanine nucleotide exchange factors RHOA and RAC1A or RAC1B. The mTORC2 complex also phosphorylates various proteins involved in insulin signaling, such as FBXW8 and IGF2BP1. May also regulate insulin signaling by acting as a tyrosine protein kinase that catalyzes phosphorylation of IGF1R and INSR. Regulates osteoclastogenesis by adjusting the expression of CEBPB isoforms. Plays an important regulatory role in the circadian clock function; regulates period length and rhythm amplitude of the suprachiasmatic nucleus (SCN) and liver clocks. The protein is Serine/threonine-protein kinase mTOR of Mus musculus (Mouse).